The chain runs to 319 residues: ATP-dependent 6-phosphofructokinase (319 aa).

An ATP-binding site is contributed by Gly11. 21–25 is an ADP binding site; the sequence is RAVVR. Residues 72–73 and 102–105 each bind ATP; these read RC and GDGS. Asp103 is a binding site for Mg(2+). Position 125-127 (125-127) interacts with substrate; that stretch reads TID. Catalysis depends on Asp127, which acts as the Proton acceptor. Arg154 is an ADP binding site. Substrate-binding positions include Arg162 and 169–171; that span reads MGR. Residues 185 to 187, Arg211, and 213 to 215 each bind ADP; these read GAE and KRH. Substrate is bound by residues Glu222, Arg243, and 249–252; that span reads HVQR.

Belongs to the phosphofructokinase type A (PFKA) family. ATP-dependent PFK group I subfamily. Prokaryotic clade 'B1' sub-subfamily. In terms of assembly, homotetramer. Mg(2+) serves as cofactor.

Its subcellular location is the cytoplasm. It carries out the reaction beta-D-fructose 6-phosphate + ATP = beta-D-fructose 1,6-bisphosphate + ADP + H(+). The protein operates within carbohydrate degradation; glycolysis; D-glyceraldehyde 3-phosphate and glycerone phosphate from D-glucose: step 3/4. With respect to regulation, allosterically activated by ADP and other diphosphonucleosides, and allosterically inhibited by phosphoenolpyruvate. Its function is as follows. Catalyzes the phosphorylation of D-fructose 6-phosphate to fructose 1,6-bisphosphate by ATP, the first committing step of glycolysis. This chain is ATP-dependent 6-phosphofructokinase, found in Clostridioides difficile (strain 630) (Peptoclostridium difficile).